A 212-amino-acid chain; its full sequence is F420-dependent NADP reductase (212 aa).

NADP(+) is bound by residues 9 to 12 (TGNL), 31 to 32 (SR), K36, I72, H76, V98, and A137. L207 contacts coenzyme F420-(gamma-Glu)n.

Belongs to the F420-dependent NADP reductase family. As to quaternary structure, homodimer.

The enzyme catalyses reduced coenzyme F420-(gamma-L-Glu)(n) + NADP(+) = oxidized coenzyme F420-(gamma-L-Glu)(n) + NADPH + 2 H(+). Catalyzes the reversible reduction of NADP(+) by F420H(2). In this reaction the proS hydrogen at C5 of F420 is transferred into the proS position at C4 of NADPH. In Archaeoglobus fulgidus (strain ATCC 49558 / DSM 4304 / JCM 9628 / NBRC 100126 / VC-16), this protein is F420-dependent NADP reductase (fno).